A 94-amino-acid polypeptide reads, in one-letter code: Venom protein 59.1 (94 aa).

The first 22 residues, 1–22 (MNSREMFCVFILFASFFYCSYA), serve as a signal peptide directing secretion. Intrachain disulfides connect cysteine 19–cysteine 47, cysteine 26–cysteine 49, cysteine 32–cysteine 50, cysteine 38–cysteine 53, cysteine 61–cysteine 76, and cysteine 70–cysteine 91. The 72-residue stretch at 23–94 (EQECNCDKSC…GEALEICLRA (72 aa)) folds into the IGFBP N-terminal domain.

Expressed by the venom gland.

It localises to the secreted. This Lychas mucronatus (Chinese swimming scorpion) protein is Venom protein 59.1.